Here is a 155-residue protein sequence, read N- to C-terminus: Small ribosomal subunit protein uS7cz/uS7cy (155 aa).

Belongs to the universal ribosomal protein uS7 family. In terms of assembly, part of the 30S ribosomal subunit.

The protein resides in the plastid. It localises to the chloroplast. One of the primary rRNA binding proteins, it binds directly to 16S rRNA where it nucleates assembly of the head domain of the 30S subunit. This chain is Small ribosomal subunit protein uS7cz/uS7cy (rps7-A), found in Piper cenocladum (Ant piper).